The sequence spans 38 residues: Cytochrome b6-f complex subunit 5 (38 aa).

A helical transmembrane segment spans residues 5-25; it reads LLSGIVLGLIPITLAGLFVTA.

The protein belongs to the PetG family. The 4 large subunits of the cytochrome b6-f complex are cytochrome b6, subunit IV (17 kDa polypeptide, PetD), cytochrome f and the Rieske protein, while the 4 small subunits are PetG, PetL, PetM and PetN. The complex functions as a dimer.

It localises to the plastid. The protein localises to the chloroplast thylakoid membrane. Its function is as follows. Component of the cytochrome b6-f complex, which mediates electron transfer between photosystem II (PSII) and photosystem I (PSI), cyclic electron flow around PSI, and state transitions. PetG is required for either the stability or assembly of the cytochrome b6-f complex. This Adiantum capillus-veneris (Maidenhair fern) protein is Cytochrome b6-f complex subunit 5.